Reading from the N-terminus, the 716-residue chain is Polyribonucleotide nucleotidyltransferase (716 aa).

D485 and D491 together coordinate Mg(2+). One can recognise a KH domain in the interval 552-611; the sequence is PKITTISVPKEKIRDVIGSGGKVIREIVEYSGAKVDIGDDGTVTIAASNDEQAQKAIARI. Positions 621-689 constitute an S1 motif domain; it reads GRIYEGKVVK…DRGKVKLSMR (69 aa).

It belongs to the polyribonucleotide nucleotidyltransferase family. Requires Mg(2+) as cofactor.

It is found in the cytoplasm. It catalyses the reaction RNA(n+1) + phosphate = RNA(n) + a ribonucleoside 5'-diphosphate. Involved in mRNA degradation. Catalyzes the phosphorolysis of single-stranded polyribonucleotides processively in the 3'- to 5'-direction. This chain is Polyribonucleotide nucleotidyltransferase, found in Gluconobacter oxydans (strain 621H) (Gluconobacter suboxydans).